The primary structure comprises 220 residues: NADH-quinone oxidoreductase subunit I (220 aa).

4Fe-4S ferredoxin-type domains are found at residues 71–102 and 112–141; these read LQRL…IITH and DSYT…MGNR. 8 residues coordinate [4Fe-4S] cluster: Cys82, Cys85, Cys88, Cys92, Cys121, Cys124, Cys127, and Cys131. The tract at residues 187-220 is disordered; it reads MQATPLDYVQEPSKEESKEETPTRSESHKGDENV. Residues 198-220 are compositionally biased toward basic and acidic residues; sequence PSKEESKEETPTRSESHKGDENV.

This sequence belongs to the complex I 23 kDa subunit family. In terms of assembly, NDH-1 is composed of 14 different subunits. Subunits NuoA, H, J, K, L, M, N constitute the membrane sector of the complex. [4Fe-4S] cluster is required as a cofactor.

The protein resides in the cell inner membrane. It carries out the reaction a quinone + NADH + 5 H(+)(in) = a quinol + NAD(+) + 4 H(+)(out). In terms of biological role, NDH-1 shuttles electrons from NADH, via FMN and iron-sulfur (Fe-S) centers, to quinones in the respiratory chain. The immediate electron acceptor for the enzyme in this species is believed to be ubiquinone. Couples the redox reaction to proton translocation (for every two electrons transferred, four hydrogen ions are translocated across the cytoplasmic membrane), and thus conserves the redox energy in a proton gradient. In Helicobacter pylori (strain G27), this protein is NADH-quinone oxidoreductase subunit I.